The sequence spans 326 residues: Probable sodium/potassium-transporting ATPase subunit beta-3 (326 aa).

The Cytoplasmic segment spans residues 1–59; sequence MMSSRTRKIYLFVFMFISTSLQLMNGEAKAEPETFRQFLYNKQKGTVLGRTGTSWCQIT. A helical; Signal-anchor for type II membrane protein transmembrane segment spans residues 60–80; sequence VFYIIFYIFLSAFFIGCLAIF. At 81–326 the chain is on the lumenal side; the sequence is LKTLDPKVPR…DKKPVAAPAA (246 aa). N144 and N147 each carry an N-linked (GlcNAc...) asparagine glycan. C234 and C291 are disulfide-bonded.

Belongs to the X(+)/potassium ATPases subunit beta family. In terms of assembly, the sodium/potassium-transporting ATPase is composed of a catalytic alpha subunit, an auxiliary non-catalytic beta subunit and an additional regulatory subunit.

The protein resides in the cell membrane. Functionally, this is the non-catalytic component of the active enzyme, which catalyzes the hydrolysis of ATP coupled with the exchange of Na(+) and K(+) ions across the plasma membrane. The beta subunit regulates, through assembly of alpha/beta heterodimers, the number of sodium pumps transported to the plasma membrane. Implicated in genomic response to various soil bacteria that affects fitness, lifespan and brood size. The sequence is that of Probable sodium/potassium-transporting ATPase subunit beta-3 (nkb-3) from Caenorhabditis briggsae.